The sequence spans 595 residues: Probable Xaa-Pro aminopeptidase CHGG_02942 (595 aa).

The interval lysine 51–valine 76 is disordered. Residues serine 52–threonine 66 show a composition bias toward low complexity. Mn(2+) is bound by residues aspartate 334, aspartate 345, glutamate 541, and glutamate 563.

Belongs to the peptidase M24B family. It depends on Mn(2+) as a cofactor.

The enzyme catalyses Release of any N-terminal amino acid, including proline, that is linked to proline, even from a dipeptide or tripeptide.. Functionally, catalyzes the removal of a penultimate prolyl residue from the N-termini of peptides. The protein is Probable Xaa-Pro aminopeptidase CHGG_02942 of Chaetomium globosum (strain ATCC 6205 / CBS 148.51 / DSM 1962 / NBRC 6347 / NRRL 1970) (Soil fungus).